A 741-amino-acid polypeptide reads, in one-letter code: Fibrinogen alpha chain (741 aa).

Positions 1–18 are cleaved as a signal peptide; that stretch reads MIPVTILCVLLCLNLAWA. Gln-19 is subject to Pyrrolidone carboxylic acid. Residues 67–506 are a coiled coil; that stretch reads CCRMQGIIDD…STRRSYNGKD (440 aa). The segment at 270 to 307 is disordered; the sequence is VAEARGDSSPSHTGKLITSSHRRESPSLVDKTSSASSV. The segment covering 277–288 has biased composition (polar residues); it reads SSPSHTGKLITS. A disulfide bond links Cys-310 and Cys-341. 2 stretches are compositionally biased toward low complexity: residues 381–398 and 435–449; these read STSS…HVTG and SASH…SSSS. The disordered stretch occupies residues 381–510; sequence STSSRHSIGS…SYNGKDCDDI (130 aa). Over residues 450–459 the composition is skewed to polar residues; sequence FNKGGSTFET. Residues 498–739 enclose the Fibrinogen C-terminal domain; sequence TRRSYNGKDC…VVRMKIRPLE (242 aa). Ca(2+) is bound by residues Asp-666, Asp-668, Trp-670, and Glu-672. Cys-674 and Cys-687 form a disulfide bridge.

Heterohexamer; disulfide linked. Contains 2 sets of 3 non-identical chains (alpha, beta and gamma). The 2 heterotrimers are in head to head conformation with the N-termini in a small central domain. In terms of processing, conversion of fibrinogen to fibrin is triggered by thrombin, which cleaves fibrinopeptides A and B from alpha and beta chains, and thus exposes the N-terminal polymerization sites responsible for the formation of the soft clot. The soft clot is converted into the hard clot by factor XIIIA which catalyzes the epsilon-(gamma-glutamyl)lysine cross-linking between gamma chains (stronger) and between alpha chains (weaker) of different monomers. Post-translationally, forms F13A-mediated cross-links between a glutamine and the epsilon-amino group of a lysine residue, forming fibronectin-fibrinogen heteropolymers.

The protein localises to the secreted. Cleaved by the protease thrombin to yield monomers which, together with fibrinogen beta (FGB) and fibrinogen gamma (FGG), polymerize to form an insoluble fibrin matrix. Fibrin has a major function in hemostasis as one of the primary components of blood clots. This Gallus gallus (Chicken) protein is Fibrinogen alpha chain (FGA).